The sequence spans 180 residues: Protein GrpE (180 aa).

This sequence belongs to the GrpE family. As to quaternary structure, homodimer.

The protein resides in the cytoplasm. In terms of biological role, participates actively in the response to hyperosmotic and heat shock by preventing the aggregation of stress-denatured proteins, in association with DnaK and GrpE. It is the nucleotide exchange factor for DnaK and may function as a thermosensor. Unfolded proteins bind initially to DnaJ; upon interaction with the DnaJ-bound protein, DnaK hydrolyzes its bound ATP, resulting in the formation of a stable complex. GrpE releases ADP from DnaK; ATP binding to DnaK triggers the release of the substrate protein, thus completing the reaction cycle. Several rounds of ATP-dependent interactions between DnaJ, DnaK and GrpE are required for fully efficient folding. This is Protein GrpE from Picrophilus torridus (strain ATCC 700027 / DSM 9790 / JCM 10055 / NBRC 100828 / KAW 2/3).